We begin with the raw amino-acid sequence, 38 residues long: Toxin BmK NSPK (38 aa).

3 disulfides stabilise this stretch: Cys7-Cys27, Cys13-Cys32, and Cys17-Cys34.

Expressed by the venom gland.

It localises to the secreted. Functionally, blocks voltage-gated potassium (Kv) channel and augments neurite extension via NGF/TrkA signaling pathway. This is Toxin BmK NSPK from Olivierus martensii (Manchurian scorpion).